A 132-amino-acid chain; its full sequence is Large ribosomal subunit protein bL12 (132 aa).

This sequence belongs to the bacterial ribosomal protein bL12 family. Homodimer. Part of the ribosomal stalk of the 50S ribosomal subunit. Forms a multimeric L10(L12)X complex, where L10 forms an elongated spine to which 2 to 4 L12 dimers bind in a sequential fashion. Binds GTP-bound translation factors.

In terms of biological role, forms part of the ribosomal stalk which helps the ribosome interact with GTP-bound translation factors. Is thus essential for accurate translation. The chain is Large ribosomal subunit protein bL12 from Chloroflexus aurantiacus (strain ATCC 29366 / DSM 635 / J-10-fl).